The sequence spans 346 residues: STE20-related kinase adapter protein stlk (346 aa).

The Protein kinase domain maps to 10-298 (YKLLEILKNG…ASKLMTHSFL (289 aa)). ATP-binding positions include 16-24 (LKNGMIGTV) and lysine 38.

The protein belongs to the protein kinase superfamily. STE Ser/Thr protein kinase family. STE20 subfamily.

In Drosophila melanogaster (Fruit fly), this protein is STE20-related kinase adapter protein stlk.